Consider the following 226-residue polypeptide: Octanoyltransferase (226 aa).

Residues 34–212 enclose the BPL/LPL catalytic domain; the sequence is LAAPDVLLTL…AFSRVFGLEF (179 aa). Substrate contacts are provided by residues 76-83, 143-145, and 156-158; these read RGGDVTYH, AIG, and GIA. The active-site Acyl-thioester intermediate is the Cys174.

This sequence belongs to the LipB family.

The protein resides in the cytoplasm. It carries out the reaction octanoyl-[ACP] + L-lysyl-[protein] = N(6)-octanoyl-L-lysyl-[protein] + holo-[ACP] + H(+). It functions in the pathway protein modification; protein lipoylation via endogenous pathway; protein N(6)-(lipoyl)lysine from octanoyl-[acyl-carrier-protein]: step 1/2. Functionally, catalyzes the transfer of endogenously produced octanoic acid from octanoyl-acyl-carrier-protein onto the lipoyl domains of lipoate-dependent enzymes. Lipoyl-ACP can also act as a substrate although octanoyl-ACP is likely to be the physiological substrate. The sequence is that of Octanoyltransferase from Thermosynechococcus vestitus (strain NIES-2133 / IAM M-273 / BP-1).